Reading from the N-terminus, the 270-residue chain is Zinc finger protein ZAT2 (270 aa).

2 stretches are compositionally biased toward polar residues: residues 1 to 28 (MSNT…YNQN) and 36 to 48 (LTNN…SSSP). Residues 1-64 (MSNTSNSDPN…QPDPDASQIA (64 aa)) form a disordered region. The segment at 65-87 (RPCTECGKQFGSLKALFGHMRCH) adopts a C2H2-type 1 zinc-finger fold. The segment at 95-119 (INPPSNFKRRINSNAASSSSSWDPS) is disordered. Over residues 106 to 115 (NSNAASSSSS) the composition is skewed to low complexity. C2H2-type zinc fingers lie at residues 148–170 (FECD…RATH) and 211–233 (HRCN…MRCH).

As to quaternary structure, interacts (via the EAR motif) with TPL. As to expression, expressed exclusively in pollen.

The protein resides in the nucleus. Functionally, mediates the regulation of male germ cell division by DUO1. The protein is Zinc finger protein ZAT2 of Arabidopsis thaliana (Mouse-ear cress).